The sequence spans 486 residues: MASIRELHEQLVKKERSAVEITQETLDHIQELEPKLHSFLHITAQQALEQARAVDAKIAAGEEIGLLAGIPIGVKDNMCTKGIPTTCASRILENFVPPYESTVTQKLLDAGAVVVGKTNLDEFAMGSSTENSAYQVTANPWDLSRVPGGSSGGSAAAVAAEECVVALGSDTGGSIRQPASFCGVVGLKPTYGLVSRYGLVAYASSLDQIGPFGKSVEDTAILLKAIAGYDHQDSTSLKVEIPDYVASLKPDLKARSKLRIGIIKETFGEGLDSVVEQAVTKAIEQLQRLGAEVHVISCPNFRYGVPSYYIIAPSEASANLARYDGVKYGWRAPEGDNLLSMYKRTRATGFGAEVKRRIMIGTYALSAGYYDAYYLKAQKVRTLIKQDFENAFKNVDVLVSPTAPTTAFKAGEKTADPISMYLNDLMTIPVNLAGLPGLSVPCGFDEQGLPIGLQLIGKVLREDQLLQIAYAYEQSTSWHLSQPKIS.

Catalysis depends on charge relay system residues K75 and S150. S174 serves as the catalytic Acyl-ester intermediate.

It belongs to the amidase family. GatA subfamily. In terms of assembly, heterotrimer of A, B and C subunits.

It catalyses the reaction L-glutamyl-tRNA(Gln) + L-glutamine + ATP + H2O = L-glutaminyl-tRNA(Gln) + L-glutamate + ADP + phosphate + H(+). Allows the formation of correctly charged Gln-tRNA(Gln) through the transamidation of misacylated Glu-tRNA(Gln) in organisms which lack glutaminyl-tRNA synthetase. The reaction takes place in the presence of glutamine and ATP through an activated gamma-phospho-Glu-tRNA(Gln). This is Glutamyl-tRNA(Gln) amidotransferase subunit A from Nostoc sp. (strain PCC 7120 / SAG 25.82 / UTEX 2576).